We begin with the raw amino-acid sequence, 852 residues long: Bifunctional uridylyltransferase/uridylyl-removing enzyme (852 aa).

The interval 1-318 (MPENLSSALE…STPVRVTLRI (318 aa)) is uridylyltransferase. Positions 319–672 (DDDYIQVNNQ…SRILPQSDSF (354 aa)) are uridylyl-removing. Residues 436-558 (VDDHILAVVR…VQTHERLSAL (123 aa)) enclose the HD domain. 2 ACT domains span residues 673–757 (QVMV…SCNR) and 785–852 (SVEI…EQLA).

This sequence belongs to the GlnD family. Requires Mg(2+) as cofactor.

The catalysed reaction is [protein-PII]-L-tyrosine + UTP = [protein-PII]-uridylyl-L-tyrosine + diphosphate. The enzyme catalyses [protein-PII]-uridylyl-L-tyrosine + H2O = [protein-PII]-L-tyrosine + UMP + H(+). Uridylyltransferase (UTase) activity is inhibited by glutamine, while glutamine activates uridylyl-removing (UR) activity. Its function is as follows. Modifies, by uridylylation and deuridylylation, the PII regulatory proteins (GlnB and homologs), in response to the nitrogen status of the cell that GlnD senses through the glutamine level. Under low glutamine levels, catalyzes the conversion of the PII proteins and UTP to PII-UMP and PPi, while under higher glutamine levels, GlnD hydrolyzes PII-UMP to PII and UMP (deuridylylation). Thus, controls uridylylation state and activity of the PII proteins, and plays an important role in the regulation of nitrogen assimilation and metabolism. The protein is Bifunctional uridylyltransferase/uridylyl-removing enzyme of Neisseria gonorrhoeae (strain ATCC 700825 / FA 1090).